The chain runs to 469 residues: Bifunctional protein GlmU (469 aa).

The interval 1–237 (MTTNRKFAIA…SHEVLGVNTR (237 aa)) is pyrophosphorylase. UDP-N-acetyl-alpha-D-glucosamine is bound by residues 12–15 (LAAG), Lys26, Gln78, 83–84 (GT), 105–107 (SGD), Gly144, Glu162, Asn177, and Asn235. Asp107 provides a ligand contact to Mg(2+). A Mg(2+)-binding site is contributed by Asn235. Residues 238–258 (QDLASLDAHLRLQKCQQLMSA) are linker. An N-acetyltransferase region spans residues 259–469 (GVSIFKPETC…KKRAEQKKKK (211 aa)). Residues Arg341 and Lys359 each coordinate UDP-N-acetyl-alpha-D-glucosamine. The Proton acceptor role is filled by His371. Positions 374 and 385 each coordinate UDP-N-acetyl-alpha-D-glucosamine. Acetyl-CoA-binding positions include Ala388, 394-395 (NY), Ser413, Ala431, and Arg448.

It in the N-terminal section; belongs to the N-acetylglucosamine-1-phosphate uridyltransferase family. In the C-terminal section; belongs to the transferase hexapeptide repeat family. In terms of assembly, homotrimer. Mg(2+) serves as cofactor.

The protein localises to the cytoplasm. It catalyses the reaction alpha-D-glucosamine 1-phosphate + acetyl-CoA = N-acetyl-alpha-D-glucosamine 1-phosphate + CoA + H(+). It carries out the reaction N-acetyl-alpha-D-glucosamine 1-phosphate + UTP + H(+) = UDP-N-acetyl-alpha-D-glucosamine + diphosphate. It functions in the pathway nucleotide-sugar biosynthesis; UDP-N-acetyl-alpha-D-glucosamine biosynthesis; N-acetyl-alpha-D-glucosamine 1-phosphate from alpha-D-glucosamine 6-phosphate (route II): step 2/2. Its pathway is nucleotide-sugar biosynthesis; UDP-N-acetyl-alpha-D-glucosamine biosynthesis; UDP-N-acetyl-alpha-D-glucosamine from N-acetyl-alpha-D-glucosamine 1-phosphate: step 1/1. The protein operates within bacterial outer membrane biogenesis; LPS lipid A biosynthesis. Its function is as follows. Catalyzes the last two sequential reactions in the de novo biosynthetic pathway for UDP-N-acetylglucosamine (UDP-GlcNAc). The C-terminal domain catalyzes the transfer of acetyl group from acetyl coenzyme A to glucosamine-1-phosphate (GlcN-1-P) to produce N-acetylglucosamine-1-phosphate (GlcNAc-1-P), which is converted into UDP-GlcNAc by the transfer of uridine 5-monophosphate (from uridine 5-triphosphate), a reaction catalyzed by the N-terminal domain. This chain is Bifunctional protein GlmU, found in Koribacter versatilis (strain Ellin345).